A 197-amino-acid polypeptide reads, in one-letter code: dTTP/UTP pyrophosphatase (197 aa).

Residue Asp70 is the Proton acceptor of the active site.

The protein belongs to the Maf family. YhdE subfamily. The cofactor is a divalent metal cation.

It localises to the cytoplasm. The enzyme catalyses dTTP + H2O = dTMP + diphosphate + H(+). It catalyses the reaction UTP + H2O = UMP + diphosphate + H(+). Functionally, nucleoside triphosphate pyrophosphatase that hydrolyzes dTTP and UTP. May have a dual role in cell division arrest and in preventing the incorporation of modified nucleotides into cellular nucleic acids. In Salmonella choleraesuis (strain SC-B67), this protein is dTTP/UTP pyrophosphatase (yceF2).